Consider the following 291-residue polypeptide: 3-hydroxy-5-phosphonooxypentane-2,4-dione thiolase (291 aa).

The active-site Schiff-base intermediate with substrate is the K203.

The protein belongs to the DeoC/FbaB aldolase family. Homodecamer.

It localises to the cytoplasm. It catalyses the reaction dihydroxyacetone phosphate + acetyl-CoA = 3-hydroxy-2,4-dioxopentyl phosphate + CoA. In terms of biological role, involved in the degradation of phospho-AI-2, thereby terminating induction of the lsr operon and closing the AI-2 signaling cycle. Catalyzes the transfer of an acetyl moiety from 3-hydroxy-5-phosphonooxypentane-2,4-dione to CoA to form glycerone phosphate and acetyl-CoA. The protein is 3-hydroxy-5-phosphonooxypentane-2,4-dione thiolase of Photorhabdus laumondii subsp. laumondii (strain DSM 15139 / CIP 105565 / TT01) (Photorhabdus luminescens subsp. laumondii).